The chain runs to 501 residues: Aspartate--tRNA ligase, cytoplasmic (501 aa).

Thr52 is subject to Phosphothreonine. Position 74 is an N6-acetyllysine (Lys74). An L-aspartate-binding site is contributed by Glu229. At Ser249 the chain carries Phosphoserine. The aspartate stretch occupies residues 251–254; the sequence is QLYK. Arg273 provides a ligand contact to L-aspartate. Residues 273–275 and 281–283 contribute to the ATP site; these read RAE and RHL. Lys374 is subject to N6-acetyllysine. Glu424 lines the ATP pocket. Ser427 and Arg431 together coordinate L-aspartate. 472–475 serves as a coordination point for ATP; the sequence is GLER.

Belongs to the class-II aminoacyl-tRNA synthetase family. Type 2 subfamily. Homodimer. Part of a multisubunit complex that groups tRNA ligases for Arg (RARS1), Asp (DARS1), Gln (QARS1), Ile (IARS1), Leu (LARS1), Lys (KARS1), Met (MARS1) the bifunctional ligase for Glu and Pro (EPRS1) and the auxiliary subunits AIMP1/p43, AIMP2/p38 and EEF1E1/p18.

The protein localises to the cytoplasm. The catalysed reaction is tRNA(Asp) + L-aspartate + ATP = L-aspartyl-tRNA(Asp) + AMP + diphosphate. Functionally, catalyzes the specific attachment of an amino acid to its cognate tRNA in a 2 step reaction: the amino acid (AA) is first activated by ATP to form AA-AMP and then transferred to the acceptor end of the tRNA. The sequence is that of Aspartate--tRNA ligase, cytoplasmic (Dars1) from Mus musculus (Mouse).